A 439-amino-acid chain; its full sequence is MFNNSIHKVSICIALTLTFSANAMAVTEIPFWHSMEGELGKEVDSIADRFNQSQPDYKIVPVYKGNYEQSLAAGIAAFRSGKAPAILQVYEVGTATMMASKAIKPVYQVFKDANIDFDESVFVPTVAGYYTDSKTGRLLSQPFNSSTPVLYYNKEAFKKAGLDPEQPPKTWQELAADTAKLRAAGSSCGYASGWQGWIQIENFSAWHGQPIASRNNGFDGTDAVLEFNKPLQVKHIQLLSDMNKKGDFTYFGRKDESTSKFYNGDCAITTASSGSLASIRHYAKFNFGVGMMPYDADAKNAPQNAIIGGASLWVMDGKDKETYKGVAEFLQYLVKPEIAAEWHQKTGYLPITTAAYELTKQQGFYEQNPGADVATRQMLNKPPLPYTKGLRLGNMPQIRTVVDEELEAVWTAKKTPQAALDNSVKRGDVLLRRFEQANK.

The signal sequence occupies residues 1 to 25 (MFNNSIHKVSICIALTLTFSANAMA). Sn-glycerol 3-phosphate contacts are provided by Tyr67, Glu91, Ser146, Ser272, Gly309, Tyr348, and Arg399.

The protein belongs to the bacterial solute-binding protein 1 family. The complex is composed of two ATP-binding proteins (UgpC), two transmembrane proteins (UgpA and UgpE) and a solute-binding protein (UgpB).

The protein resides in the periplasm. Functionally, part of the ABC transporter complex UgpBAEC involved in sn-glycerol-3-phosphate (G3P) import. Binds G3P. The polypeptide is sn-glycerol-3-phosphate-binding periplasmic protein UgpB (ugpB) (Yersinia pestis bv. Antiqua (strain Antiqua)).